The sequence spans 272 residues: Large ribosomal subunit protein uL2cz/uL2cy (272 aa).

2 disordered regions span residues 1–33 (MAIHLYKTSTSSTRNGAVQVKSNPRNNLISGQR) and 220–272 (VMNP…RRSK). Ala2 is subject to N-methylalanine. Positions 7–30 (KTSTSSTRNGAVQVKSNPRNNLIS) are enriched in polar residues.

It belongs to the universal ribosomal protein uL2 family. In terms of assembly, component of the chloroplast large ribosomal subunit (LSU). Mature 70S chloroplast ribosomes of higher plants consist of a small (30S) and a large (50S) subunit. The 30S small subunit contains 1 molecule of ribosomal RNA (16S rRNA) and 24 different proteins. The 50S large subunit contains 3 rRNA molecules (23S, 5S and 4.5S rRNA) and 33 different proteins.

Its subcellular location is the plastid. It localises to the chloroplast. In terms of biological role, component of the chloroplast ribosome (chloro-ribosome), a dedicated translation machinery responsible for the synthesis of chloroplast genome-encoded proteins, including proteins of the transcription and translation machinery and components of the photosynthetic apparatus. The chain is Large ribosomal subunit protein uL2cz/uL2cy (rpl2-A) from Spinacia oleracea (Spinach).